The sequence spans 409 residues: Sharpin (409 aa).

Residues 1-178 are self-association; the sequence is MAPPAGGTAA…EKEELAGRLT (178 aa). Positions 121-164 are disordered; the sequence is EGQNGSDSLPPALGPETRPVSPPSPLEVPTPKAPKPKVDLPWSP. Residues 140–153 are compositionally biased toward pro residues; the sequence is VSPPSPLEVPTPKA. Serine 163 carries the post-translational modification Phosphoserine. The tract at residues 173–300 is interaction with SHANK1; sequence LAGRLTRAVE…LLSAPREAPG (128 aa). Positions 217–280 constitute a Ubiquitin-like domain; the sequence is IRLQVTVEDA…PEHSLAFYGV (64 aa). Serine 302 carries the phosphoserine modification. A disordered region spans residues 315–337; the sequence is RLFPQSLGLPPTPQPTSSSLPSP. Low complexity predominate over residues 318-336; the sequence is PQSLGLPPTPQPTSSSLPS. A RanBP2-type zinc finger spans residues 338 to 367; it reads LQPGWPCPSCTFINAPSRPGCEMCSTQRPC. Residues 384–409 are disordered; sequence TRREDGPSLPGPRSLDPLLNLSGNLC.

As to quaternary structure, monomer and homodimer. Component of the LUBAC complex (linear ubiquitin chain assembly complex) which consists of SHARPIN, RBCK1 and RNF31. LUBAC has a MW of approximately 600 kDa suggesting a heteromultimeric assembly of its subunits. Associates with the TNF-R1 signaling complex (TNF-RSC) in a stimulation-dependent manner. Interacts with EYA1, EYA2, SHANK1 and SHANK3 (via ANK repeats).

Its subcellular location is the cytoplasm. The protein resides in the cytosol. It localises to the synapse. It functions in the pathway protein modification; protein ubiquitination. Its function is as follows. Component of the LUBAC complex which conjugates linear polyubiquitin chains in a head-to-tail manner to substrates and plays a key role in NF-kappa-B activation and regulation of inflammation. LUBAC conjugates linear polyubiquitin to IKBKG and RIPK1 and is involved in activation of the canonical NF-kappa-B and the JNK signaling pathways. Linear ubiquitination mediated by the LUBAC complex interferes with TNF-induced cell death and thereby prevents inflammation. LUBAC is recruited to the TNF-R1 signaling complex (TNF-RSC) following polyubiquitination of TNF-RSC components by BIRC2 and/or BIRC3 and to conjugate linear polyubiquitin to IKBKG and possibly other components contributing to the stability of the complex. The LUBAC complex is also involved in innate immunity by conjugating linear polyubiquitin chains at the surface of bacteria invading the cytosol to form the ubiquitin coat surrounding bacteria. LUBAC is not able to initiate formation of the bacterial ubiquitin coat, and can only promote formation of linear polyubiquitins on pre-existing ubiquitin. The bacterial ubiquitin coat acts as an 'eat-me' signal for xenophagy and promotes NF-kappa-B activation. Together with OTULIN, the LUBAC complex regulates the canonical Wnt signaling during angiogenesis. The protein is Sharpin (SHARPIN) of Bos taurus (Bovine).